A 503-amino-acid chain; its full sequence is ATP synthase subunit alpha, chloroplastic (503 aa).

170-177 (GDRQTGKT) lines the ATP pocket.

Belongs to the ATPase alpha/beta chains family. F-type ATPases have 2 components, CF(1) - the catalytic core - and CF(0) - the membrane proton channel. CF(1) has five subunits: alpha(3), beta(3), gamma(1), delta(1), epsilon(1). CF(0) has four main subunits: a, b, b' and c.

The protein resides in the plastid. Its subcellular location is the chloroplast thylakoid membrane. The enzyme catalyses ATP + H2O + 4 H(+)(in) = ADP + phosphate + 5 H(+)(out). Produces ATP from ADP in the presence of a proton gradient across the membrane. The alpha chain is a regulatory subunit. The sequence is that of ATP synthase subunit alpha, chloroplastic from Thalassiosira pseudonana (Marine diatom).